The following is a 448-amino-acid chain: Methylenetetrahydrofolate--tRNA-(uracil-5-)-methyltransferase TrmFO (448 aa).

13–18 (GAGLAG) lines the FAD pocket.

The protein belongs to the MnmG family. TrmFO subfamily. FAD is required as a cofactor.

It is found in the cytoplasm. It carries out the reaction uridine(54) in tRNA + (6R)-5,10-methylene-5,6,7,8-tetrahydrofolate + NADH + H(+) = 5-methyluridine(54) in tRNA + (6S)-5,6,7,8-tetrahydrofolate + NAD(+). The catalysed reaction is uridine(54) in tRNA + (6R)-5,10-methylene-5,6,7,8-tetrahydrofolate + NADPH + H(+) = 5-methyluridine(54) in tRNA + (6S)-5,6,7,8-tetrahydrofolate + NADP(+). In terms of biological role, catalyzes the folate-dependent formation of 5-methyl-uridine at position 54 (M-5-U54) in all tRNAs. The polypeptide is Methylenetetrahydrofolate--tRNA-(uracil-5-)-methyltransferase TrmFO (Streptococcus pyogenes serotype M6 (strain ATCC BAA-946 / MGAS10394)).